We begin with the raw amino-acid sequence, 878 residues long: Aconitate hydratase A (878 aa).

The [4Fe-4S] cluster site is built by C426, C492, and C495.

Belongs to the aconitase/IPM isomerase family. Monomer. Requires [4Fe-4S] cluster as cofactor.

It carries out the reaction citrate = D-threo-isocitrate. The enzyme catalyses (2S,3R)-3-hydroxybutane-1,2,3-tricarboxylate = 2-methyl-cis-aconitate + H2O. It participates in carbohydrate metabolism; tricarboxylic acid cycle; isocitrate from oxaloacetate: step 2/2. The protein operates within organic acid metabolism; propanoate degradation. Functionally, involved in the catabolism of short chain fatty acids (SCFA) via the tricarboxylic acid (TCA)(acetyl degradation route) and probably the 2-methylcitrate cycle I (propionate degradation route). Catalyzes the reversible isomerization of citrate to isocitrate via cis-aconitate. Could catalyze the hydration of 2-methyl-cis-aconitate to yield (2R,3S)-2-methylisocitrate. The apo form of AcnA functions as a RNA-binding regulatory protein. This Rickettsia typhi (strain ATCC VR-144 / Wilmington) protein is Aconitate hydratase A (acnA).